Reading from the N-terminus, the 397-residue chain is Mannonate dehydratase (397 aa).

It belongs to the mannonate dehydratase family. Fe(2+) serves as cofactor. Mn(2+) is required as a cofactor.

The enzyme catalyses D-mannonate = 2-dehydro-3-deoxy-D-gluconate + H2O. Its pathway is carbohydrate metabolism; pentose and glucuronate interconversion. In terms of biological role, catalyzes the dehydration of D-mannonate. This chain is Mannonate dehydratase, found in Yersinia pseudotuberculosis serotype O:1b (strain IP 31758).